We begin with the raw amino-acid sequence, 150 residues long: Large ribosomal subunit protein bL9 (150 aa).

It belongs to the bacterial ribosomal protein bL9 family.

Functionally, binds to the 23S rRNA. The polypeptide is Large ribosomal subunit protein bL9 (Leptothrix cholodnii (strain ATCC 51168 / LMG 8142 / SP-6) (Leptothrix discophora (strain SP-6))).